The sequence spans 3748 residues: Intermembrane lipid transfer protein VPS13C (3748 aa).

Residues 3 to 115 (LESVVADLLN…SLQDIKQKEL (113 aa)) form the Chorein N-terminal domain. Serine 132 is subject to Phosphoserine. Residue threonine 613 is modified to Phosphothreonine. A Phosphoserine modification is found at serine 618. Threonine 623 carries the phosphothreonine modification. 4 positions are modified to phosphoserine: serine 736, serine 841, serine 871, and serine 873. The FFAT motif lies at 876-882 (EFFDAED). At threonine 1968 the chain carries Phosphothreonine. Serine 1974 and serine 2442 each carry phosphoserine. Positions 2410–3304 (DYSLKDRAPF…IQQDIDALNT (895 aa)) are required for late endosome/lysosome localization. In terms of domain architecture, SHR-BD spans 2760–3012 (ELSVFSPYWL…LFAWADPTGI (253 aa)). A required for lipid droplet localization region spans residues 3305-3748 (ELMESSMTDM…VKLLRPQGPS (444 aa)). Omega-N-methylarginine occurs at positions 3514 and 3521. The residue at position 3533 (lysine 3533) is an N6-acetyllysine.

This sequence belongs to the VPS13 family.

It localises to the mitochondrion outer membrane. It is found in the lipid droplet. The protein resides in the endoplasmic reticulum membrane. The protein localises to the lysosome membrane. Its subcellular location is the late endosome membrane. In terms of biological role, mediates the transfer of lipids between membranes at organelle contact sites. Necessary for proper mitochondrial function and maintenance of mitochondrial transmembrane potential. Involved in the regulation of PINK1/PRKN-mediated mitophagy in response to mitochondrial depolarization. The polypeptide is Intermembrane lipid transfer protein VPS13C (Mus musculus (Mouse)).